A 139-amino-acid polypeptide reads, in one-letter code: MAITVHCDIVSAEQEIFSGTVQSLVAAGSYGDLGIMPGHAPLLTTLQAGPVRVVKENGDEEVIFVSGGFLEVQPHRVTVLANTATRARDLDEEAALKAQEHAKELLANQKPDVDYTRATAELVEAMARLRTIQQFRNNK.

The protein belongs to the ATPase epsilon chain family. As to quaternary structure, F-type ATPases have 2 components, CF(1) - the catalytic core - and CF(0) - the membrane proton channel. CF(1) has five subunits: alpha(3), beta(3), gamma(1), delta(1), epsilon(1). CF(0) has three main subunits: a, b and c.

The protein resides in the cell inner membrane. Produces ATP from ADP in the presence of a proton gradient across the membrane. This is ATP synthase epsilon chain from Marinomonas sp. (strain MWYL1).